The following is a 515-amino-acid chain: Putative asparagine synthetase [glutamine-hydrolyzing] 2 (515 aa).

Cys-2 (for GATase activity) is an active-site residue. The 228-residue stretch at 2-229 folds into the Glutamine amidotransferase type-2 domain; sequence CGINGIIRFG…ARQNLIFDLD (228 aa). Residues 52–56, 92–94, and Asp-114 each bind L-glutamine; these read RLAIL and NGE. ATP-binding positions include Ile-306 and 378-379; that span reads SG.

This sequence belongs to the asparagine synthetase family.

It catalyses the reaction L-aspartate + L-glutamine + ATP + H2O = L-asparagine + L-glutamate + AMP + diphosphate + H(+). It functions in the pathway amino-acid biosynthesis; L-asparagine biosynthesis; L-asparagine from L-aspartate (L-Gln route): step 1/1. The protein is Putative asparagine synthetase [glutamine-hydrolyzing] 2 of Methanocaldococcus jannaschii (strain ATCC 43067 / DSM 2661 / JAL-1 / JCM 10045 / NBRC 100440) (Methanococcus jannaschii).